Consider the following 433-residue polypeptide: Probable phosphoglucosamine mutase (433 aa).

S91 acts as the Phosphoserine intermediate in catalysis. The Mg(2+) site is built by S91, D229, D231, and D233. S91 bears the Phosphoserine mark.

The protein belongs to the phosphohexose mutase family. It depends on Mg(2+) as a cofactor. Activated by phosphorylation.

It carries out the reaction alpha-D-glucosamine 1-phosphate = D-glucosamine 6-phosphate. Catalyzes the conversion of glucosamine-6-phosphate to glucosamine-1-phosphate. This is Probable phosphoglucosamine mutase from Methanococcoides burtonii (strain DSM 6242 / NBRC 107633 / OCM 468 / ACE-M).